The chain runs to 155 residues: MAPK regulated corepressor interacting protein 2 (155 aa).

At methionine 1 the chain carries N-acetylmethionine. Residues 1–59 (MYTITKGPSKLVAQRRTGPTQQQVESRLGELLKCRHSAPTPQHPRAQPPGPWPLSSPGP) form a disordered region. Arginine 35 carries the omega-N-methylarginine modification. Positions 46 to 56 (AQPPGPWPLSS) are enriched in pro residues. Serine 56 is modified (phosphoserine). At arginine 60 the chain carries Omega-N-methylarginine. Residue serine 77 is modified to Phosphoserine.

This sequence belongs to the MCRIP family. As to quaternary structure, interacts with DDX6. Interacts with MCRIP1.

The protein localises to the cytoplasm. It localises to the stress granule. It is found in the nucleus. This Bos taurus (Bovine) protein is MAPK regulated corepressor interacting protein 2 (MCRIP2).